The following is a 385-amino-acid chain: Glucans biosynthesis protein C (385 aa).

10 consecutive transmembrane segments (helical) span residues 17–37 (AWLM…SHTW), 60–80 (MQVF…RYPL), 91–111 (VGIP…IMLQ), 137–157 (ISHL…VWIF), 173–193 (KFSM…YAVI), 212–232 (FIVM…LAFI), 239–259 (LFTT…VAYL), 274–294 (TESV…FSFG), 311–331 (ASLF…AYIT), and 338–358 (WLGF…LYEI).

This sequence belongs to the acyltransferase 3 family. OpgC subfamily.

It is found in the cell membrane. It participates in glycan metabolism; osmoregulated periplasmic glucan (OPG) biosynthesis. Necessary for the succinyl substitution of periplasmic glucans. Could catalyze the transfer of succinyl residues from the cytoplasmic side of the membrane to the nascent glucan backbones on the periplasmic side of the membrane. The protein is Glucans biosynthesis protein C of Escherichia coli O17:K52:H18 (strain UMN026 / ExPEC).